The chain runs to 144 residues: Maximins z/Hv (144 aa).

The first 18 residues, 1–18 (MNFKYIVAVSFLIASGYA), serve as a signal peptide directing secretion. A propeptide spanning residues 19-43 (RSEENDVQSLSQREVLEEESLREIR) is cleaved from the precursor. Asn70 carries the asparagine amide modification. Residues 74-123 (TAEDHEVMKRLKAVMRDLDSLDHPEEASERETRGFNQEEIANLFTKKEKR) constitute a propeptide that is removed on maturation. Ile143 carries the isoleucine amide modification.

This sequence belongs to the bombinin family. In terms of tissue distribution, expressed by the skin glands.

The protein resides in the secreted. Maximin-z shows antimicrobial activity against bacteria and against the fungus C.albicans. It has little hemolytic activity. In terms of biological role, maximin-Hv shows antimicrobial activity against bacteria and against the fungus C.albicans. Shows strong hemolytic activity. This chain is Maximins z/Hv, found in Bombina maxima (Giant fire-bellied toad).